The sequence spans 634 residues: Phospholipase B (634 aa).

Positions 1 to 19 (MSIITTAFALSLLATTAFA) are cleaved as a signal peptide. Residues 46-569 (DCPSNVTWIR…DTWCWAGDDN (524 aa)) enclose the PLA2c domain. 17 N-linked (GlcNAc...) asparagine glycosylation sites follow: Asn-50, Asn-56, Asn-122, Asn-231, Asn-246, Asn-269, Asn-311, Asn-340, Asn-384, Asn-430, Asn-478, Asn-498, Asn-525, Asn-550, Asn-569, Asn-591, and Asn-603.

The protein belongs to the lysophospholipase family. In terms of processing, N-glycosylated.

Its subcellular location is the secreted. The enzyme catalyses a 1-acyl-sn-glycero-3-phosphocholine + H2O = sn-glycerol 3-phosphocholine + a fatty acid + H(+). In terms of biological role, exhibits phospholipase B (PLB), lysophospholipase (LPL) and lysophospholipase/transacylase (LPTA) activities. In Cryptococcus neoformans var. neoformans serotype D (strain JEC21 / ATCC MYA-565) (Filobasidiella neoformans), this protein is Phospholipase B (PLB1).